Reading from the N-terminus, the 558-residue chain is Arginine--tRNA ligase (558 aa).

Residues 119–129 (PNIAKPMSMGH) carry the 'HIGH' region motif.

Belongs to the class-I aminoacyl-tRNA synthetase family. As to quaternary structure, monomer.

The protein resides in the cytoplasm. The enzyme catalyses tRNA(Arg) + L-arginine + ATP = L-arginyl-tRNA(Arg) + AMP + diphosphate. This chain is Arginine--tRNA ligase, found in Lactobacillus johnsonii (strain CNCM I-12250 / La1 / NCC 533).